We begin with the raw amino-acid sequence, 595 residues long: SVP1-like protein 2 (595 aa).

The segment at 1–28 (MVLAHSINTNPNTNTNTNNTSTTSSTTT) is disordered. A WD 1 repeat occupies 30–68 (PNDSKILCINFNQDQGCFAISHEQGFLVYNTDPIELRVK). Low complexity-rich tracts occupy residues 76–112 (HTTS…GSNN) and 270–339 (LSPT…TTTT). 2 disordered regions span residues 76–132 (HTTS…GSGS) and 264–342 (FSKR…TSAK). 2 WD repeats span residues 389 to 429 (AHKS…LLYE) and 434 to 473 (IDRA…YPND). The segment at 467–490 (ETQYPNDGGSGGTKDGGGGGRGSK) is disordered. A compositionally biased stretch (gly residues) spans 474–488 (GGSGGTKDGGGGGRG).

This sequence belongs to the WD repeat PROPPIN family.

It localises to the vacuole membrane. The protein resides in the cytoplasmic vesicle membrane. In terms of biological role, involved in mitochondrial or peroxisomal functions and amino acid signaling pathways. The polypeptide is SVP1-like protein 2 (HSV2) (Candida albicans (strain SC5314 / ATCC MYA-2876) (Yeast)).